The following is a 461-amino-acid chain: Glycerol-3-phosphate acyltransferase, chloroplastic (461 aa).

The N-terminal 96 residues, 1–96 (MSMTGSSAYY…SPPNMSASVS (96 aa)), are a transit peptide targeting the chloroplast. The segment covering 47 to 76 (LLSSTSSSSSSSISLRSSTAPSPSCSSVTP) has biased composition (low complexity). The interval 47-88 (LLSSTSSSSSSSISLRSSTAPSPSCSSVTPKDNCLASAKHSP) is disordered. Positions 231–236 (HQTEAD) match the HXXXXD motif motif.

Belongs to the GPAT/DAPAT family.

The protein localises to the plastid. It localises to the chloroplast stroma. It catalyses the reaction sn-glycerol 3-phosphate + an acyl-CoA = a 1-acyl-sn-glycero-3-phosphate + CoA. It participates in phospholipid metabolism; CDP-diacylglycerol biosynthesis; CDP-diacylglycerol from sn-glycerol 3-phosphate: step 1/3. In terms of biological role, esterifies acyl-group from acyl-ACP to the sn-1 position of glycerol-3-phosphate. The enzyme from chilling-resistant plants discriminates against non-fluid palmitic acid and selects oleic acid whereas the enzyme from sensitive plants accepts both fatty acids. The chain is Glycerol-3-phosphate acyltransferase, chloroplastic (PLSB) from Phaseolus vulgaris (Kidney bean).